The following is a 447-amino-acid chain: Asparagine--tRNA ligase (447 aa).

Belongs to the class-II aminoacyl-tRNA synthetase family. As to quaternary structure, homodimer.

It is found in the cytoplasm. It carries out the reaction tRNA(Asn) + L-asparagine + ATP = L-asparaginyl-tRNA(Asn) + AMP + diphosphate + H(+). The chain is Asparagine--tRNA ligase from Streptococcus pneumoniae serotype 4 (strain ATCC BAA-334 / TIGR4).